The primary structure comprises 317 residues: ADP-L-glycero-D-manno-heptose-6-epimerase (317 aa).

NADP(+)-binding positions include F10–I11, D31–D32, Q38, K53, Q75–S79, and N92. Y139 functions as the Proton acceptor in the catalytic mechanism. K143 serves as a coordination point for NADP(+). N166 contributes to the substrate binding site. NADP(+) contacts are provided by V167 and K175. The active-site Proton acceptor is the K175. Substrate-binding positions include G177, H184, F198–V201, R211, and Y275.

This sequence belongs to the NAD(P)-dependent epimerase/dehydratase family. HldD subfamily. Homopentamer. NADP(+) is required as a cofactor.

It catalyses the reaction ADP-D-glycero-beta-D-manno-heptose = ADP-L-glycero-beta-D-manno-heptose. It participates in nucleotide-sugar biosynthesis; ADP-L-glycero-beta-D-manno-heptose biosynthesis; ADP-L-glycero-beta-D-manno-heptose from D-glycero-beta-D-manno-heptose 7-phosphate: step 4/4. In terms of biological role, catalyzes the interconversion between ADP-D-glycero-beta-D-manno-heptose and ADP-L-glycero-beta-D-manno-heptose via an epimerization at carbon 6 of the heptose. The protein is ADP-L-glycero-D-manno-heptose-6-epimerase of Shewanella frigidimarina (strain NCIMB 400).